Consider the following 274-residue polypeptide: Large ribosomal subunit protein uL2 (274 aa).

The tract at residues 221–256 (RGTAMNPVDHPHGGGEGRNFGKHPVTPWGVPTKGYK) is disordered.

It belongs to the universal ribosomal protein uL2 family. Part of the 50S ribosomal subunit. Forms a bridge to the 30S subunit in the 70S ribosome.

In terms of biological role, one of the primary rRNA binding proteins. Required for association of the 30S and 50S subunits to form the 70S ribosome, for tRNA binding and peptide bond formation. It has been suggested to have peptidyltransferase activity; this is somewhat controversial. Makes several contacts with the 16S rRNA in the 70S ribosome. This chain is Large ribosomal subunit protein uL2, found in Thioalkalivibrio sulfidiphilus (strain HL-EbGR7).